We begin with the raw amino-acid sequence, 320 residues long: Cytochrome f (320 aa).

The signal sequence occupies residues 1–35 (MQNRNTFSWVKEEMTRFISVSIMIYVITRTSISNA). The heme site is built by Tyr-36, Cys-56, Cys-59, and His-60. A helical transmembrane segment spans residues 286-306 (VQGLLFFLASVILAQIFLVLK).

This sequence belongs to the cytochrome f family. The 4 large subunits of the cytochrome b6-f complex are cytochrome b6, subunit IV (17 kDa polypeptide, petD), cytochrome f and the Rieske protein, while the 4 small subunits are PetG, PetL, PetM and PetN. The complex functions as a dimer. It depends on heme as a cofactor.

The protein localises to the plastid. Its subcellular location is the chloroplast thylakoid membrane. Its function is as follows. Component of the cytochrome b6-f complex, which mediates electron transfer between photosystem II (PSII) and photosystem I (PSI), cyclic electron flow around PSI, and state transitions. The protein is Cytochrome f of Calycanthus floridus var. glaucus (Eastern sweetshrub).